The primary structure comprises 48 residues: ATP synthase protein 8 (48 aa).

Residues 13–32 (VVFTLISLSFIFFVFSKYIL) form a helical membrane-spanning segment.

Belongs to the ATPase protein 8 family. In terms of assembly, F-type ATPases have 2 components, CF(1) - the catalytic core - and CF(0) - the membrane proton channel.

It localises to the mitochondrion membrane. In terms of biological role, mitochondrial membrane ATP synthase (F(1)F(0) ATP synthase or Complex V) produces ATP from ADP in the presence of a proton gradient across the membrane which is generated by electron transport complexes of the respiratory chain. F-type ATPases consist of two structural domains, F(1) - containing the extramembraneous catalytic core and F(0) - containing the membrane proton channel, linked together by a central stalk and a peripheral stalk. During catalysis, ATP synthesis in the catalytic domain of F(1) is coupled via a rotary mechanism of the central stalk subunits to proton translocation. Part of the complex F(0) domain. Minor subunit located with subunit a in the membrane. This chain is ATP synthase protein 8 (ATP8), found in Trichophyton rubrum (Athlete's foot fungus).